An 898-amino-acid polypeptide reads, in one-letter code: Alanine--tRNA ligase (898 aa).

Residues histidine 582, histidine 586, cysteine 685, and histidine 689 each contribute to the Zn(2+) site.

It belongs to the class-II aminoacyl-tRNA synthetase family. The cofactor is Zn(2+).

The protein localises to the cytoplasm. It catalyses the reaction tRNA(Ala) + L-alanine + ATP = L-alanyl-tRNA(Ala) + AMP + diphosphate. Its function is as follows. Catalyzes the attachment of alanine to tRNA(Ala) in a two-step reaction: alanine is first activated by ATP to form Ala-AMP and then transferred to the acceptor end of tRNA(Ala). Also edits incorrectly charged Ser-tRNA(Ala) and Gly-tRNA(Ala) via its editing domain. The sequence is that of Alanine--tRNA ligase from Mycolicibacterium vanbaalenii (strain DSM 7251 / JCM 13017 / BCRC 16820 / KCTC 9966 / NRRL B-24157 / PYR-1) (Mycobacterium vanbaalenii).